Consider the following 160-residue polypeptide: Major pollen allergen Bet v 1-E (160 aa).

The brassinolide site is built by Lys55, Tyr82, Tyr84, and Asn101.

This sequence belongs to the BetVI family.

It localises to the cytoplasm. Functionally, may be a general steroid carrier protein. The protein is Major pollen allergen Bet v 1-E (BETV1E) of Betula pendula (European white birch).